A 101-amino-acid polypeptide reads, in one-letter code: Small ribosomal subunit protein uS14 (101 aa).

This sequence belongs to the universal ribosomal protein uS14 family. In terms of assembly, part of the 30S ribosomal subunit. Contacts proteins S3 and S10.

Functionally, binds 16S rRNA, required for the assembly of 30S particles and may also be responsible for determining the conformation of the 16S rRNA at the A site. This is Small ribosomal subunit protein uS14 from Idiomarina loihiensis (strain ATCC BAA-735 / DSM 15497 / L2-TR).